Reading from the N-terminus, the 127-residue chain is UPF0166 protein PH1503 (127 aa).

Belongs to the UPF0166 family.

The polypeptide is UPF0166 protein PH1503 (Pyrococcus horikoshii (strain ATCC 700860 / DSM 12428 / JCM 9974 / NBRC 100139 / OT-3)).